Reading from the N-terminus, the 429-residue chain is Ribosomal RNA small subunit methyltransferase B (429 aa).

Residues 254 to 260 (CAAPGGK), D277, D303, and D322 each bind S-adenosyl-L-methionine. C375 acts as the Nucleophile in catalysis. Residues 397-419 (ALSETGTPDQPGQQNLPGGEEGD) are disordered. Over residues 400–412 (ETGTPDQPGQQNL) the composition is skewed to polar residues.

This sequence belongs to the class I-like SAM-binding methyltransferase superfamily. RsmB/NOP family.

It localises to the cytoplasm. The enzyme catalyses cytidine(967) in 16S rRNA + S-adenosyl-L-methionine = 5-methylcytidine(967) in 16S rRNA + S-adenosyl-L-homocysteine + H(+). Functionally, specifically methylates the cytosine at position 967 (m5C967) of 16S rRNA. The sequence is that of Ribosomal RNA small subunit methyltransferase B from Salmonella agona (strain SL483).